We begin with the raw amino-acid sequence, 211 residues long: Glutathione S-transferase (211 aa).

The GST N-terminal domain occupies 3-87 (DNIVLYYFDA…YLSKKYNICG (85 aa)). Glutathione contacts are provided by residues 58–59 (QV), 71–72 (QS), Asp-105, Lys-117, and Thr-121. The 123-residue stretch at 89 to 211 (SELNEFYADM…YITNRKESVY (123 aa)) folds into the GST C-terminal domain.

This sequence belongs to the GST superfamily. As to quaternary structure, homodimer. In the absence of ligands two homodimers may interact to form a tetramer.

It catalyses the reaction RX + glutathione = an S-substituted glutathione + a halide anion + H(+). Its activity is regulated as follows. Inhibited by chloroquine, cibacron blue, ferriprotoporphyrin IX (hemin) and S-hexylglutathione. Conjugation of reduced glutathione to a wide number of exogenous and endogenous hydrophobic electrophiles. May also function as a storage protein or ligandin for parasitotoxic ferriprotoporphyrin IX (hemin). In Plasmodium falciparum (isolate 3D7), this protein is Glutathione S-transferase.